The following is a 70-amino-acid chain: MLYPSIDNLLEKLDSKYSLVTVSARRAREMKEDSARVPLVEKPKSYKFVGIALEEIVNDQLTKRVPKEEQ.

The protein belongs to the RNA polymerase subunit omega family. In terms of assembly, the RNAP catalytic core consists of 2 alpha, 1 beta, 1 beta' and 1 omega subunit. When a sigma factor is associated with the core the holoenzyme is formed, which can initiate transcription.

It catalyses the reaction RNA(n) + a ribonucleoside 5'-triphosphate = RNA(n+1) + diphosphate. In terms of biological role, promotes RNA polymerase assembly. Latches the N- and C-terminal regions of the beta' subunit thereby facilitating its interaction with the beta and alpha subunits. This chain is DNA-directed RNA polymerase subunit omega, found in Shouchella clausii (strain KSM-K16) (Alkalihalobacillus clausii).